A 1456-amino-acid polypeptide reads, in one-letter code: Leucine-rich repeat-containing protein 9 (1456 aa).

8 LRR repeats span residues 53–78 (FHNL…CLQL), 97–119 (CRNL…LEKL), 120–141 (IKLE…LQTL), 142–164 (KNLK…LDPN), 166–188 (QLEK…NLTK), 190–212 (TRLK…QLCN), 224–248 (LQRL…AMKK), and 264–287 (NEEL…RIKL). Positions 305-325 (SSKGQSDTTPEAEKPRNSEVV) are disordered. The stretch at 339–362 (LSALDDRVTFWNKKLHEIEAIYRT) is one LRR 9 repeat. Tyr-525 is subject to Phosphotyrosine. LRR repeat units lie at residues 661-683 (KPRP…TNIY), 684-705 (SHIV…LAKL), 706-727 (TGLR…VYHL), 729-748 (NLEY…GFRG), 749-772 (LMKL…INVL), 776-802 (TTSL…VIGR), 806-833 (LTHL…KITQ), 876-898 (YSKI…LEKL), 899-920 (ENLK…LESC), 921-942 (VNLE…ITRL), 943-965 (TKLS…TFDN), 967-991 (LHLH…TFTL), 993-1010 (ELYI…IYNL), 1013-1037 (LCNL…RFFV), 1082-1105 (FIQM…PVDH), 1106-1128 (FRNV…LIYL), 1129-1151 (PNVK…LKPQ), 1191-1214 (MQSL…QLNR), 1215-1237 (LRNL…LDNL), 1238-1260 (IVLQ…AFSK), 1262-1283 (SSLL…LQSL), 1284-1307 (VKLE…KLDV), and 1309-1335 (PSLR…IFRL).

The protein is Leucine-rich repeat-containing protein 9 (Lrrc9) of Mus musculus (Mouse).